We begin with the raw amino-acid sequence, 729 residues long: Neurochondrin (729 aa).

Ser-2 bears the N-acetylserine mark. At Ser-2 the chain carries Phosphoserine. Residues Cys-3 and Cys-4 are each lipidated (S-palmitoyl cysteine). The residue at position 75 (Arg-75) is an Asymmetric dimethylarginine. Position 448 is a phosphoserine (Ser-448).

This sequence belongs to the neurochondrin family. In terms of assembly, interacts with MCHR1. Interacts with SEMA4C. Interacts with DIAPH1 (via FH3 domain). Interacts with GRM5. Post-translationally, palmitoylated. Palmitoylation by ZDHHC1, ZDHHC3 and ZDHHC11 regulates the association of NCDN with endosome membranes. May also be palmitoylated by ZDHHC7. In terms of tissue distribution, expressed in brain and in peripheral nervous system (at protein level). Weakly expressed in neurites.

The protein resides in the cytoplasm. Its subcellular location is the cytosol. It is found in the endosome membrane. It localises to the cell projection. The protein localises to the dendrite. The protein resides in the postsynapse. Functionally, probably involved in signal transduction, in the nervous system, via increasing cell surface localization of GRM5 and positively regulating its signaling. Required for the spatial learning process. Acts as a negative regulator of Ca(2+)-calmodulin-dependent protein kinase 2 (CaMK2) phosphorylation. May play a role in modulating melanin-concentrating hormone-mediated functions via its interaction with MCHR1 that interferes with G protein-coupled signal transduction. May be involved in bone metabolism. May also be involved in neurite outgrowth. In Rattus norvegicus (Rat), this protein is Neurochondrin (Ncdn).